A 580-amino-acid polypeptide reads, in one-letter code: Nucleolar protein 58 (580 aa).

The region spanning isoleucine 285–glycine 410 is the Nop domain. The tract at residues aspartate 444 to glutamate 580 is disordered. Residues glutamate 465–glutamate 487 show a composition bias toward acidic residues. Basic and acidic residues-rich tracts occupy residues serine 495 to glutamate 505 and lysine 547 to aspartate 562. A compositionally biased stretch (basic residues) spans lysine 570–glutamate 580.

Belongs to the NOP5/NOP56 family.

Its subcellular location is the nucleus. The protein localises to the nucleolus. Functionally, required for pre-18S rRNA processing. May bind microtubules. The chain is Nucleolar protein 58 (nop58) from Aspergillus niger (strain ATCC MYA-4892 / CBS 513.88 / FGSC A1513).